Here is a 437-residue protein sequence, read N- to C-terminus: tRNA(Ile2) 2-agmatinylcytidine synthetase TiaS (437 aa).

Belongs to the TiaS family.

It is found in the cytoplasm. The catalysed reaction is cytidine(34) in tRNA(Ile2) + agmatine + ATP + H2O = 2-agmatinylcytidine(34) in tRNA(Ile2) + AMP + 2 phosphate + 2 H(+). Functionally, ATP-dependent agmatine transferase that catalyzes the formation of 2-agmatinylcytidine (agm2C) at the wobble position (C34) of tRNA(Ile2), converting the codon specificity from AUG to AUA. The protein is tRNA(Ile2) 2-agmatinylcytidine synthetase TiaS of Acidilobus saccharovorans (strain DSM 16705 / JCM 18335 / VKM B-2471 / 345-15).